The sequence spans 250 residues: tRNA (guanine-N(1)-)-methyltransferase (250 aa).

S-adenosyl-L-methionine is bound by residues Gly116 and 136–141; that span reads IGDYVL.

The protein belongs to the RNA methyltransferase TrmD family. As to quaternary structure, homodimer.

Its subcellular location is the cytoplasm. It catalyses the reaction guanosine(37) in tRNA + S-adenosyl-L-methionine = N(1)-methylguanosine(37) in tRNA + S-adenosyl-L-homocysteine + H(+). Specifically methylates guanosine-37 in various tRNAs. The chain is tRNA (guanine-N(1)-)-methyltransferase from Pseudomonas putida (strain ATCC 47054 / DSM 6125 / CFBP 8728 / NCIMB 11950 / KT2440).